Reading from the N-terminus, the 121-residue chain is Acidic phospholipase A2 SpII RP4 (121 aa).

Cystine bridges form between cysteine 25–cysteine 114, cysteine 27–cysteine 43, cysteine 42–cysteine 94, cysteine 48–cysteine 121, cysteine 49–cysteine 87, cysteine 56–cysteine 80, and cysteine 74–cysteine 85. The Ca(2+) site is built by tyrosine 26, glycine 28, and glycine 30. The active site involves histidine 46. Aspartate 47 contacts Ca(2+). Residue aspartate 88 is part of the active site.

Ca(2+) is required as a cofactor. In terms of tissue distribution, expressed by the venom gland.

It localises to the secreted. The enzyme catalyses a 1,2-diacyl-sn-glycero-3-phosphocholine + H2O = a 1-acyl-sn-glycero-3-phosphocholine + a fatty acid + H(+). In terms of biological role, snake venom phospholipase A2 (PLA2) which exhibits indirect hemolysis, induces mild edema inflammation in the foot pads of mice and slightly delays anticoagulant activities. In mice, not lethal, even at the highest dose, and exhibits low to moderate myotoxicity on muscular fibers. PLA2 catalyzes the calcium-dependent hydrolysis of the 2-acyl groups in 3-sn-phosphoglycerides. This is Acidic phospholipase A2 SpII RP4 from Bothrops alternatus (Urutu).